Here is a 469-residue protein sequence, read N- to C-terminus: Glutamate-1-semialdehyde 2,1-aminomutase, chloroplastic (469 aa).

A chloroplast-targeting transit peptide spans 1 to 34 (MAGAAAAVASGISIRPVAAPKISRAPRSRSVVRA). Lys-309 bears the N6-(pyridoxal phosphate)lysine mark.

This sequence belongs to the class-III pyridoxal-phosphate-dependent aminotransferase family. HemL subfamily. In terms of assembly, homodimer. Pyridoxal 5'-phosphate serves as cofactor.

The protein localises to the plastid. It localises to the chloroplast. The enzyme catalyses (S)-4-amino-5-oxopentanoate = 5-aminolevulinate. The protein operates within porphyrin-containing compound metabolism; protoporphyrin-IX biosynthesis; 5-aminolevulinate from L-glutamyl-tRNA(Glu): step 2/2. It participates in porphyrin-containing compound metabolism; chlorophyll biosynthesis. The polypeptide is Glutamate-1-semialdehyde 2,1-aminomutase, chloroplastic (GSA) (Hordeum vulgare (Barley)).